A 250-amino-acid chain; its full sequence is 1-acyl-sn-glycerol-3-phosphate acyltransferase (250 aa).

The HXXXXD motif motif lies at 88-93; sequence HIAAMD.

This sequence belongs to the 1-acyl-sn-glycerol-3-phosphate acyltransferase family.

It catalyses the reaction a 1-acyl-sn-glycero-3-phosphate + an acyl-CoA = a 1,2-diacyl-sn-glycero-3-phosphate + CoA. It participates in phospholipid metabolism; CDP-diacylglycerol biosynthesis; CDP-diacylglycerol from sn-glycerol 3-phosphate: step 2/3. In terms of biological role, converts lysophosphatidic acid (LPA) into phosphatidic acid by incorporating acyl moiety at the 2 position. This chain is 1-acyl-sn-glycerol-3-phosphate acyltransferase (plsC), found in Borreliella burgdorferi (strain ATCC 35210 / DSM 4680 / CIP 102532 / B31) (Borrelia burgdorferi).